Reading from the N-terminus, the 158-residue chain is Eukaryotic translation initiation factor 5A-3 (158 aa).

Over residues 1-10 (MSDDEHHFES) the composition is skewed to basic and acidic residues. The interval 1–23 (MSDDEHHFESSDAGASKTYPQQA) is disordered. At Ser2 the chain carries Phosphoserine. A Hypusine modification is found at Lys51.

Belongs to the eIF-5A family. In terms of processing, lys-52 undergoes hypusination, a unique post-translational modification that consists in the addition of a butylamino group from spermidine to lysine side chain, leading to the formation of the unusual amino acid hypusine. eIF-5As are the only known proteins to undergo this modification, which is essential for their function. In terms of tissue distribution, expressed in the vascular tissues of roots, stems and leaves. Localized in phloem companion cells rather than sieve-tube members. Not expressed in xylem or procambium. Detected in root tips and in the chalazal tissue of fertilized ovules.

Its function is as follows. Translation factor that promotes translation elongation and termination, particularly upon ribosome stalling at specific amino acid sequence contexts. Binds between the exit (E) and peptidyl (P) site of the ribosome and promotes rescue of stalled ribosome: specifically required for efficient translation of polyproline-containing peptides as well as other motifs that stall the ribosome. Acts as a ribosome quality control (RQC) cofactor by joining the RQC complex to facilitate peptidyl transfer during CAT tailing step. Involved in supporting growth and plays a regulatory role in the response to sub-lethal osmotic and nutrient stress. This chain is Eukaryotic translation initiation factor 5A-3 (ELF5A-3), found in Arabidopsis thaliana (Mouse-ear cress).